Reading from the N-terminus, the 701-residue chain is CRS2-associated factor 1, chloroplastic (701 aa).

Residues 1–37 (MSLKLNTPFPIFAPSLFPNHNPRAPSEIRFSRWGNAN) constitute a chloroplast transit peptide. Disordered stretches follow at residues 68 to 136 (VHTH…PEVK) and 191 to 221 (LPQSQKTPREFDSFRLPPVGKKGLKPVQKPG). 2 CRM domains span residues 241 to 337 (EPLT…TRPR) and 359 to 455 (EGLT…LTTP). A disordered region spans residues 471–532 (LPEDDEPSVS…SLQSWSTKDV (62 aa)). Polar residues-rich tracts occupy residues 479–492 (VSPNQSQTMTQNPP) and 520–530 (TINSLQSWSTK). The segment at 564–586 (RVLILMKQAVESGTALVLDAADL) is CRS2 binding.

As to quaternary structure, interacts with CRS2 and RNA. Part of large ribonucleo-protein complexes that include group IIB introns, CRS2 and CAF1.

The protein resides in the plastid. It is found in the chloroplast stroma. Functionally, required for the splicing of group IIB introns in chloroplasts. Forms splicing particles with CRS2. Interacts with RNA and confers intron specificity of the splicing particles. The chain is CRS2-associated factor 1, chloroplastic from Arabidopsis thaliana (Mouse-ear cress).